The following is a 186-amino-acid chain: Secreted chorismate mutase (186 aa).

Positions methionine 1–alanine 30 are cleaved as a signal peptide. The Chorismate mutase domain occupies glutamine 31–arginine 107. A disulfide bond links cysteine 33 and cysteine 148. Residues arginine 43, lysine 54, aspartate 63, alanine 99–glutamine 103, and arginine 127 each bind substrate.

As to quaternary structure, homodimer.

It localises to the periplasm. It carries out the reaction chorismate = prephenate. It functions in the pathway metabolic intermediate biosynthesis; prephenate biosynthesis; prephenate from chorismate: step 1/1. In terms of biological role, catalyzes the Claisen rearrangement of chorismate to prephenate. May play some role in the pathogenicity. The sequence is that of Secreted chorismate mutase (pheA2) from Yersinia pestis.